The primary structure comprises 606 residues: Fructan 6-exohydrolase (606 aa).

A signal peptide spans 1 to 21 (MAPNNGSWLVLSISMMLLSHG). N5 is a glycosylation site (N-linked (GlcNAc...) asparagine). The active site involves D70. Residues N110, N164, N193, N237, and N346 are each glycosylated (N-linked (GlcNAc...) asparagine). The cysteines at positions 445 and 491 are disulfide-linked. Residues N564, N585, N590, and N593 are each glycosylated (N-linked (GlcNAc...) asparagine).

It belongs to the glycosyl hydrolase 32 family.

It carries out the reaction Hydrolysis of terminal, non-reducing (2-&gt;6)-linked beta-D-fructofuranose residues in fructans.. Not inhibited by sucrose. In terms of biological role, hydrolyzes levan-type beta-(2-&gt;6)-linked fructans to fructose, but not inulin-type beta-(2-&gt;1)-linked fructans. The polypeptide is Fructan 6-exohydrolase (Beta vulgaris (Sugar beet)).